The chain runs to 896 residues: Putative mannosylglycerate hydrolase (896 aa).

The a divalent metal cation site is built by H12, D14, D125, and H348. D125 serves as the catalytic Nucleophile.

The protein belongs to the glycosyl hydrolase 38 family. Requires a divalent metal cation as cofactor.

It carries out the reaction (2R)-2-O-(6-phospho-alpha-D-mannosyl)-glycerate + H2O = alpha-D-mannose 6-phosphate + (R)-glycerate. May hydrolyze 6-phospho-mannosyl-D-glycerate to mannose-6-phosphate and glycerate. The polypeptide is Putative mannosylglycerate hydrolase (mngB) (Halalkalibacterium halodurans (strain ATCC BAA-125 / DSM 18197 / FERM 7344 / JCM 9153 / C-125) (Bacillus halodurans)).